Here is a 295-residue protein sequence, read N- to C-terminus: MFKQYLQVTKPGIIFGNLISVIGGFLLASKGSIDYTLFASTLVGVSLVVASGCVFNNYIDMDIDRKMERTKNRVLVKGLISPTVSLVYATLLGIAGFMLLWFGANPLACWLGVMGFVVYVGVYSLYMKRHSVYGTLIGSLSGAAPPVIGYCAVTNEFDSGALILLAIFSLWQMPHSYAIAIFRFKDYQAANIPVLPVVKGISVAKNHITLYIIAFAVATLMLSLGGYAGYKYLVVAAAVSVWWLGMALRGYKVEDDKVWARKLFVFSIVAITSLSVMMSVDFMVPDSHSLLTYVW.

9 helical membrane passes run 8-28 (VTKP…FLLA), 35-55 (YTLF…GCVF), 84-104 (VSLV…WFGA), 107-127 (LACW…SLYM), 132-152 (VYGT…GYCA), 162-182 (LILL…IAIF), 208-228 (ITLY…GGYA), 233-253 (LVVA…GYKV), and 264-284 (FVFS…DFMV).

It belongs to the UbiA prenyltransferase family. Protoheme IX farnesyltransferase subfamily.

It is found in the cell inner membrane. It carries out the reaction heme b + (2E,6E)-farnesyl diphosphate + H2O = Fe(II)-heme o + diphosphate. It participates in porphyrin-containing compound metabolism; heme O biosynthesis; heme O from protoheme: step 1/1. Its function is as follows. Converts heme B (protoheme IX) to heme O by substitution of the vinyl group on carbon 2 of heme B porphyrin ring with a hydroxyethyl farnesyl side group. The sequence is that of Protoheme IX farnesyltransferase from Enterobacter sp. (strain 638).